Reading from the N-terminus, the 469-residue chain is Transcription factor SOX-10 (469 aa).

Disordered stretches follow at residues 1–70 (MAEE…DDDK), 163–203 (LRMQ…QGGA), 215–278 (LDHR…DFGN), 357–378 (AQVK…QPST), and 436–469 (RPLY…LSRP). Low complexity predominate over residues 23–32 (LSPGSAPSLG). Position 24 is a phosphoserine (Ser-24). The span at 33 to 44 (PDGGGGGGGGSG) shows a compositional bias: gly residues. A dimerization (DIM) region spans residues 65–105 (EADDDKFPVCIREAVSQVLSGYDWTLVPMPVRVNGASKSKP). Residues 107 to 175 (VKRPMNAFMV…QHKKDHPDYK (69 aa)) constitute a DNA-binding region (HMG box). Basic and acidic residues-rich tracts occupy residues 163–176 (LRMQ…DYKY) and 257–274 (ADPK…KPHI). The interval 231-313 (PEHPSGQSHG…LPPNGHPGHV (83 aa)) is transactivation domain (TAM). The tract at residues 356–469 (KAQVKTETAG…QPVYTTLSRP (114 aa)) is transactivation domain (TAC). Residues 443–469 (SDPSPSGPQSHSPTHWEQPVYTTLSRP) show a composition bias toward polar residues.

Monomer. Interacts with ARMCX3 at the mitochondrial outer membrane surface. Interacts with PAX3.

Its subcellular location is the cytoplasm. It is found in the nucleus. The protein localises to the mitochondrion outer membrane. In terms of biological role, transcription factor that plays a central role in developing and mature glia. Specifically activates expression of myelin genes, during oligodendrocyte (OL) maturation, such as DUSP15 and MYRF, thereby playing a central role in oligodendrocyte maturation and CNS myelination. Once induced, MYRF cooperates with SOX10 to implement the myelination program. Transcriptional activator of MITF, acting synergistically with PAX3. Transcriptional activator of MBP, via binding to the gene promoter. The chain is Transcription factor SOX-10 (SOX10) from Sus scrofa (Pig).